Here is a 333-residue protein sequence, read N- to C-terminus: uncharacterized protein (333 aa).

This sequence belongs to the polysaccharide synthase family.

This is an uncharacterized protein from Methanocaldococcus jannaschii (strain ATCC 43067 / DSM 2661 / JAL-1 / JCM 10045 / NBRC 100440) (Methanococcus jannaschii).